The chain runs to 270 residues: dTDP-6-deoxy-L-talose 4-dehydrogenase (NAD(+)) (270 aa).

Residues 11 to 12 (YI), 50 to 51 (DI), 72 to 76 (LAWQA), asparagine 87, threonine 112, tyrosine 135, and lysine 139 each bind NAD(+). Threonine 112 and tyrosine 135 together coordinate substrate. Tyrosine 135 functions as the Proton acceptor in the catalytic mechanism.

It belongs to the NAD(P)-dependent epimerase/dehydratase family.

It carries out the reaction dTDP-6-deoxy-beta-L-talose + NAD(+) = dTDP-4-dehydro-beta-L-rhamnose + NADH + H(+). It functions in the pathway bacterial outer membrane biogenesis; LPS O-antigen biosynthesis. Its function is as follows. Catalyzes the reduction of dTDP-6-deoxy-L-lyxo-4-hexulose to dTDP-6-deoxy-L-talose. This Aggregatibacter actinomycetemcomitans (Actinobacillus actinomycetemcomitans) protein is dTDP-6-deoxy-L-talose 4-dehydrogenase (NAD(+)) (tll).